Reading from the N-terminus, the 87-residue chain is Small ribosomal subunit protein uS15c (87 aa).

The protein belongs to the universal ribosomal protein uS15 family. In terms of assembly, part of the 30S ribosomal subunit.

The protein localises to the plastid. The protein resides in the chloroplast. The polypeptide is Small ribosomal subunit protein uS15c (rps15) (Solanum bulbocastanum (Wild potato)).